The chain runs to 234 residues: tRNA1(Val) (adenine(37)-N6)-methyltransferase (234 aa).

It belongs to the methyltransferase superfamily. tRNA (adenine-N(6)-)-methyltransferase family.

The protein localises to the cytoplasm. The catalysed reaction is adenosine(37) in tRNA1(Val) + S-adenosyl-L-methionine = N(6)-methyladenosine(37) in tRNA1(Val) + S-adenosyl-L-homocysteine + H(+). Functionally, specifically methylates the adenine in position 37 of tRNA(1)(Val) (anticodon cmo5UAC). The protein is tRNA1(Val) (adenine(37)-N6)-methyltransferase of Aliivibrio salmonicida (strain LFI1238) (Vibrio salmonicida (strain LFI1238)).